The following is a 326-amino-acid chain: Flap endonuclease 1 (326 aa).

The segment at 1–100 is N-domain; it reads MGNAALRQLA…EEVQERRVAR (100 aa). The Mg(2+) site is built by Asp28, Asp82, Glu154, Glu156, Asp175, Asp177, and Asp225. Positions 118 to 246 are I-domain; that stretch reads AASRLEARTQ…TAISAINDHG (129 aa). An interaction with PCNA region spans residues 318–326; it reads VQTGLDEWI.

The protein belongs to the XPG/RAD2 endonuclease family. FEN1 subfamily. Interacts with PCNA. PCNA stimulates the nuclease activity without altering cleavage specificity. The cofactor is Mg(2+).

Its function is as follows. Structure-specific nuclease with 5'-flap endonuclease and 5'-3' exonuclease activities involved in DNA replication and repair. During DNA replication, cleaves the 5'-overhanging flap structure that is generated by displacement synthesis when DNA polymerase encounters the 5'-end of a downstream Okazaki fragment. Binds the unpaired 3'-DNA end and kinks the DNA to facilitate 5' cleavage specificity. Cleaves one nucleotide into the double-stranded DNA from the junction in flap DNA, leaving a nick for ligation. Also involved in the base excision repair (BER) pathway. Acts as a genome stabilization factor that prevents flaps from equilibrating into structures that lead to duplications and deletions. Also possesses 5'-3' exonuclease activity on nicked or gapped double-stranded DNA. This is Flap endonuclease 1 from Haloquadratum walsbyi (strain DSM 16790 / HBSQ001).